Here is a 236-residue protein sequence, read N- to C-terminus: Auxin-responsive protein IAA16 (236 aa).

An EAR-like (transcriptional repression) motif is present at residues Leu9–Leu13. The interval Lys82–Ser110 is disordered. Positions Met85 to Asp94 are enriched in polar residues. In terms of domain architecture, PB1 spans Val118–Gly218.

It belongs to the Aux/IAA family. In terms of assembly, homodimers and heterodimers.

Its subcellular location is the nucleus. Functionally, aux/IAA proteins are short-lived transcriptional factors that function as repressors of early auxin response genes at low auxin concentrations. Repression is thought to result from the interaction with auxin response factors (ARFs), proteins that bind to the auxin-responsive promoter element (AuxRE). Formation of heterodimers with ARF proteins may alter their ability to modulate early auxin response genes expression. The protein is Auxin-responsive protein IAA16 (IAA16) of Arabidopsis thaliana (Mouse-ear cress).